The sequence spans 214 residues: Glucose-6-phosphate isomerase (214 aa).

The Fe cation site is built by H92, H94, E101, and H140.

The protein belongs to the archaeal-type GPI family. Homodimer.

The protein localises to the cytoplasm. The catalysed reaction is alpha-D-glucose 6-phosphate = beta-D-fructose 6-phosphate. It functions in the pathway carbohydrate degradation; glycolysis; D-glyceraldehyde 3-phosphate and glycerone phosphate from D-glucose: step 2/4. In Sinorhizobium medicae (strain WSM419) (Ensifer medicae), this protein is Glucose-6-phosphate isomerase.